Reading from the N-terminus, the 152-residue chain is MSSKMIVLMSSDGQSFEVEEAVAIQSQTIAHMVEDDCVADGIPLANVESKILVKVIEYCKKYHVDEANPISEEDLNKWDEKFMDLEQSTIFELILAANYLNIKSLFDLTCQTVADMIKGKTPEEIRSTFNIENDFTPEEEEAVRKENQWAFE.

Residues 94 to 152 (ILAANYLNIKSLFDLTCQTVADMIKGKTPEEIRSTFNIENDFTPEEEEAVRKENQWAFE) form an interaction with the F-box domain of F-box proteins region.

This sequence belongs to the SKP1 family. Part of a SCF (SKP1-cullin-F-box) protein ligase complex. Interacts with ADO3/FKF1, COI1/FBL2, EBF1/FBL6, PP2B10, At3g61590 and At5g49610. In terms of tissue distribution, expressed in young seedlings, roots, leaves, floral stems, inflorescences, and siliques, with a slightly higher level in inflorescence than in other tissues.

The protein resides in the nucleus. It participates in protein modification; protein ubiquitination. Its function is as follows. Involved in ubiquitination and subsequent proteasomal degradation of target proteins. Together with CUL1, RBX1 and a F-box protein, it forms a SCF E3 ubiquitin ligase complex. The functional specificity of this complex depends on the type of F-box protein. In the SCF complex, it serves as an adapter that links the F-box protein to CUL1. Plays a role during early flowers reproductive development. This is SKP1-like protein 12 (ASK12) from Arabidopsis thaliana (Mouse-ear cress).